The primary structure comprises 34 residues: Sarcoplasmic/endoplasmic reticulum calcium ATPase regulator DWORF (34 aa).

The helical transmembrane segment at 12 to 32 (IVPILLLVGWIVGCIIVIYIV) threads the bilayer.

In terms of assembly, homooligomer. Can also form heterooligomers with other sarcoplasmic/endoplasmic reticulum calcium ATPase (SERCA) regulators ARLN, ERLN, PLN and SLN. Monomer. Interacts with ATP2A1/SERCA1; the interaction results in activation of ATP2A1. Interacts as a monomer with ATP2A2/SERCA2; the interaction results in activation of ATP2A2. In terms of tissue distribution, highly expressed in heart (at protein level). Detected in heart and soleus, a postural muscle group of the hindlimb containing the highest enrichment of slow-twitch muscle fibers. Also expressed in diaphragm, which contains some slow-twitch fibers. Not detected in the quadriceps, a fast-twitch muscle group, or in cardiac atrial muscle. Not expressed in the prenatal heart but gradually increases in abundance postnatally.

The protein localises to the sarcoplasmic reticulum membrane. Functionally, enhances the activity of ATP2A1/SERCA1 ATPase in sarcoplasmic reticulum by displacing ATP2A1/SERCA1 inhibitors, thereby acting as a key regulator of skeletal muscle activity. Also enhances the activity of the ATP2A2/SERCA2 ATPase. Does not directly stimulate SERCA pump activity. Binds preferentially to the phosphorylated E1 and E2 conformational forms of ATP2A2 which predominate at high Ca(2+) concentrations during the systolic phase of the cardiac cycle. Competes with ATP2A2 inhibitor phospholamban (PLN) for binding to ATP2A2 and displaces PLN. Can activate ATP2A2 directly in the absence of PLN. Also enhances sarcoplasmic reticulum Ca(2+) uptake and myocyte contractility by displacing the SERCA inhibitory peptides sarcolipin (SLN) and myoregulin (MRLN). The polypeptide is Sarcoplasmic/endoplasmic reticulum calcium ATPase regulator DWORF (Mus musculus (Mouse)).